The chain runs to 80 residues: ATP synthase subunit c (80 aa).

A run of 2 helical transmembrane segments spans residues 11-31 (IAAT…IGIL) and 54-74 (FIVM…GLYI).

The protein belongs to the ATPase C chain family. In terms of assembly, F-type ATPases have 2 components, F(1) - the catalytic core - and F(0) - the membrane proton channel. F(1) has five subunits: alpha(3), beta(3), gamma(1), delta(1), epsilon(1). F(0) has three main subunits: a(1), b(2) and c(10-14). The alpha and beta chains form an alternating ring which encloses part of the gamma chain. F(1) is attached to F(0) by a central stalk formed by the gamma and epsilon chains, while a peripheral stalk is formed by the delta and b chains.

Its subcellular location is the cell membrane. F(1)F(0) ATP synthase produces ATP from ADP in the presence of a proton or sodium gradient. F-type ATPases consist of two structural domains, F(1) containing the extramembraneous catalytic core and F(0) containing the membrane proton channel, linked together by a central stalk and a peripheral stalk. During catalysis, ATP synthesis in the catalytic domain of F(1) is coupled via a rotary mechanism of the central stalk subunits to proton translocation. In terms of biological role, key component of the F(0) channel; it plays a direct role in translocation across the membrane. A homomeric c-ring of between 10-14 subunits forms the central stalk rotor element with the F(1) delta and epsilon subunits. The sequence is that of ATP synthase subunit c from Baumannia cicadellinicola subsp. Homalodisca coagulata.